Consider the following 647-residue polypeptide: Threonine--tRNA ligase (647 aa).

The 63-residue stretch at 1-63 (MYMIQLTFPD…EHDGKIELVM (63 aa)) folds into the TGS domain. The tract at residues 247–544 (DHRKLGKELD…LIEEYKGAFP (298 aa)) is catalytic. 3 residues coordinate Zn(2+): C340, H391, and H521.

Belongs to the class-II aminoacyl-tRNA synthetase family. Homodimer. Requires Zn(2+) as cofactor.

It localises to the cytoplasm. It carries out the reaction tRNA(Thr) + L-threonine + ATP = L-threonyl-tRNA(Thr) + AMP + diphosphate + H(+). Its function is as follows. Catalyzes the attachment of threonine to tRNA(Thr) in a two-step reaction: L-threonine is first activated by ATP to form Thr-AMP and then transferred to the acceptor end of tRNA(Thr). Also edits incorrectly charged L-seryl-tRNA(Thr). This chain is Threonine--tRNA ligase, found in Exiguobacterium sp. (strain ATCC BAA-1283 / AT1b).